Reading from the N-terminus, the 320-residue chain is Tetraacyldisaccharide 4'-kinase (320 aa).

ATP is bound at residue 53–60; the sequence is SVGGNGKT.

This sequence belongs to the LpxK family.

The catalysed reaction is a lipid A disaccharide + ATP = a lipid IVA + ADP + H(+). It functions in the pathway glycolipid biosynthesis; lipid IV(A) biosynthesis; lipid IV(A) from (3R)-3-hydroxytetradecanoyl-[acyl-carrier-protein] and UDP-N-acetyl-alpha-D-glucosamine: step 6/6. Functionally, transfers the gamma-phosphate of ATP to the 4'-position of a tetraacyldisaccharide 1-phosphate intermediate (termed DS-1-P) to form tetraacyldisaccharide 1,4'-bis-phosphate (lipid IVA). This Psychromonas ingrahamii (strain DSM 17664 / CCUG 51855 / 37) protein is Tetraacyldisaccharide 4'-kinase.